A 369-amino-acid polypeptide reads, in one-letter code: DNA replication and repair protein RecF (369 aa).

30–37 (GDNAQGKT) is an ATP binding site.

The protein belongs to the RecF family.

The protein resides in the cytoplasm. In terms of biological role, the RecF protein is involved in DNA metabolism; it is required for DNA replication and normal SOS inducibility. RecF binds preferentially to single-stranded, linear DNA. It also seems to bind ATP. The polypeptide is DNA replication and repair protein RecF (Streptococcus equi subsp. zooepidemicus (strain MGCS10565)).